The following is a 269-amino-acid chain: 4-hydroxy-tetrahydrodipicolinate reductase (269 aa).

NAD(+) is bound by residues Gly-10–Met-15, Glu-36, Gly-99–Thr-101, and Ala-123–Phe-126. The active-site Proton donor/acceptor is the His-156. Residue His-157 participates in (S)-2,3,4,5-tetrahydrodipicolinate binding. The active-site Proton donor is the Lys-160. Position 166–167 (Gly-166–Thr-167) interacts with (S)-2,3,4,5-tetrahydrodipicolinate.

The protein belongs to the DapB family.

It is found in the cytoplasm. The enzyme catalyses (S)-2,3,4,5-tetrahydrodipicolinate + NAD(+) + H2O = (2S,4S)-4-hydroxy-2,3,4,5-tetrahydrodipicolinate + NADH + H(+). It carries out the reaction (S)-2,3,4,5-tetrahydrodipicolinate + NADP(+) + H2O = (2S,4S)-4-hydroxy-2,3,4,5-tetrahydrodipicolinate + NADPH + H(+). It functions in the pathway amino-acid biosynthesis; L-lysine biosynthesis via DAP pathway; (S)-tetrahydrodipicolinate from L-aspartate: step 4/4. Its function is as follows. Catalyzes the conversion of 4-hydroxy-tetrahydrodipicolinate (HTPA) to tetrahydrodipicolinate. This Neisseria meningitidis serogroup A / serotype 4A (strain DSM 15465 / Z2491) protein is 4-hydroxy-tetrahydrodipicolinate reductase.